The following is a 150-amino-acid chain: Macrodomain Ter protein (150 aa).

It belongs to the MatP family. As to quaternary structure, homodimer.

The protein localises to the cytoplasm. Functionally, required for spatial organization of the terminus region of the chromosome (Ter macrodomain) during the cell cycle. Prevents early segregation of duplicated Ter macrodomains during cell division. Binds specifically to matS, which is a 13 bp signature motif repeated within the Ter macrodomain. This chain is Macrodomain Ter protein, found in Escherichia coli (strain SMS-3-5 / SECEC).